The primary structure comprises 351 residues: ATP-dependent protease ATP-binding subunit-like protein (351 aa).

Residues 1 to 26 are disordered; sequence MPYITDMLRDRNSAATPPAEERSEPV. 79 to 86 is an ATP binding site; the sequence is GPTGVGKT.

This sequence belongs to the ClpA/ClpB family.

The polypeptide is ATP-dependent protease ATP-binding subunit-like protein (Rhodococcus erythropolis (Arthrobacter picolinophilus)).